Here is a 220-residue protein sequence, read N- to C-terminus: tRNA (guanine-N(7)-)-methyltransferase (220 aa).

S-adenosyl-L-methionine contacts are provided by Glu44, Glu69, Asp96, and Asp118. The active site involves Asp118. Residue Lys122 coordinates substrate. The interval 124-129 is interaction with RNA; it reads RHEKRR. Residues Asp154 and 191 to 194 contribute to the substrate site; that span reads TEYE.

It belongs to the class I-like SAM-binding methyltransferase superfamily. TrmB family.

The catalysed reaction is guanosine(46) in tRNA + S-adenosyl-L-methionine = N(7)-methylguanosine(46) in tRNA + S-adenosyl-L-homocysteine. The protein operates within tRNA modification; N(7)-methylguanine-tRNA biosynthesis. Its function is as follows. Catalyzes the formation of N(7)-methylguanine at position 46 (m7G46) in tRNA. The protein is tRNA (guanine-N(7)-)-methyltransferase of Halalkalibacterium halodurans (strain ATCC BAA-125 / DSM 18197 / FERM 7344 / JCM 9153 / C-125) (Bacillus halodurans).